Reading from the N-terminus, the 283-residue chain is Shikimate kinase (283 aa).

ATP is bound at residue 86–96; the sequence is PLKSGLSSSSA.

This sequence belongs to the GHMP kinase family. Archaeal shikimate kinase subfamily.

Its subcellular location is the cytoplasm. It carries out the reaction shikimate + ATP = 3-phosphoshikimate + ADP + H(+). Its pathway is metabolic intermediate biosynthesis; chorismate biosynthesis; chorismate from D-erythrose 4-phosphate and phosphoenolpyruvate: step 5/7. In Methanococcus vannielii (strain ATCC 35089 / DSM 1224 / JCM 13029 / OCM 148 / SB), this protein is Shikimate kinase.